A 134-amino-acid chain; its full sequence is Small ribosomal subunit protein uS11 (134 aa).

This sequence belongs to the universal ribosomal protein uS11 family. As to quaternary structure, part of the 30S ribosomal subunit. Interacts with proteins S7 and S18. Binds to IF-3.

Its function is as follows. Located on the platform of the 30S subunit, it bridges several disparate RNA helices of the 16S rRNA. Forms part of the Shine-Dalgarno cleft in the 70S ribosome. The polypeptide is Small ribosomal subunit protein uS11 (Corynebacterium diphtheriae (strain ATCC 700971 / NCTC 13129 / Biotype gravis)).